The chain runs to 292 residues: Glycine--tRNA ligase alpha subunit (292 aa).

The protein belongs to the class-II aminoacyl-tRNA synthetase family. Tetramer of two alpha and two beta subunits.

Its subcellular location is the cytoplasm. The enzyme catalyses tRNA(Gly) + glycine + ATP = glycyl-tRNA(Gly) + AMP + diphosphate. The protein is Glycine--tRNA ligase alpha subunit of Pelobacter propionicus (strain DSM 2379 / NBRC 103807 / OttBd1).